The sequence spans 306 residues: F-box/LRR-repeat protein At3g26922 (306 aa).

Positions 13 to 73 (EDRISDLPEA…QSEDETYSEI (61 aa)) constitute an F-box domain. LRR repeat units follow at residues 67–93 (DETYSEIVCRLLLSNKAPFLESLHLGF), 98–122 (CRSVEVGMWIGIAYARHVRDLVLHV), 138–170 (CETLESLTLRSWVLVDVPSPACLKSLRTLRLEN), 171–196 (VDYKYDDSVYNLLSGCPNLENLVVYR), 215–243 (LTIYDDNDGEYCTGYVINAPSLKYLKIDG), and 263–288 (IMNVSKIINEKLLETLTSVKRLSLAL).

This Arabidopsis thaliana (Mouse-ear cress) protein is F-box/LRR-repeat protein At3g26922.